The sequence spans 600 residues: Proline--tRNA ligase (600 aa).

Belongs to the class-II aminoacyl-tRNA synthetase family. ProS type 1 subfamily. As to quaternary structure, homodimer.

It localises to the cytoplasm. It carries out the reaction tRNA(Pro) + L-proline + ATP = L-prolyl-tRNA(Pro) + AMP + diphosphate. Catalyzes the attachment of proline to tRNA(Pro) in a two-step reaction: proline is first activated by ATP to form Pro-AMP and then transferred to the acceptor end of tRNA(Pro). As ProRS can inadvertently accommodate and process non-cognate amino acids such as alanine and cysteine, to avoid such errors it has two additional distinct editing activities against alanine. One activity is designated as 'pretransfer' editing and involves the tRNA(Pro)-independent hydrolysis of activated Ala-AMP. The other activity is designated 'posttransfer' editing and involves deacylation of mischarged Ala-tRNA(Pro). The misacylated Cys-tRNA(Pro) is not edited by ProRS. The polypeptide is Proline--tRNA ligase (Prochlorococcus marinus (strain MIT 9312)).